A 657-amino-acid polypeptide reads, in one-letter code: Folic acid synthesis protein FOL1 (657 aa).

Residues 1–116 (MDKIIIKDLL…WPGVQIERTL (116 aa)) form a DHNA region. Residues 149-274 (YLAFGSNLGD…FVLLPLSDIA (126 aa)) are HPPK. One can recognise a Pterin-binding domain in the interval 333–641 (TFIMGILNVT…DIPEIRDAML (309 aa)). The segment at 335 to 657 (IMGILNVTPD…KPQRRYQIQK (323 aa)) is DHPS. Residue Asn-340 participates in Mg(2+) binding. (7,8-dihydropterin-6-yl)methyl diphosphate-binding residues include Thr-380, Asp-416, and Asn-435. Residues 466 to 524 (LNNSNDSNSNSSINTNGEDNNNNNNNNNNNNNNNNNNNNNNNNNDDNDNDNRSKIKQKI) form a disordered region. Residues 467–509 (NNSNDSNSNSSINTNGEDNNNNNNNNNNNNNNNNNNNNNNNNN) are compositionally biased toward low complexity. Residues 514 to 524 (NDNRSKIKQKI) are compositionally biased toward basic and acidic residues. Residues Asp-547, Lys-583, and 629–631 (RIH) each bind (7,8-dihydropterin-6-yl)methyl diphosphate.

It in the N-terminal section; belongs to the DHNA family. The protein in the central section; belongs to the HPPK family. In the C-terminal section; belongs to the DHPS family. Requires Mg(2+) as cofactor.

It catalyses the reaction 7,8-dihydroneopterin = 6-hydroxymethyl-7,8-dihydropterin + glycolaldehyde. The catalysed reaction is 6-hydroxymethyl-7,8-dihydropterin + ATP = (7,8-dihydropterin-6-yl)methyl diphosphate + AMP + H(+). It carries out the reaction (7,8-dihydropterin-6-yl)methyl diphosphate + 4-aminobenzoate = 7,8-dihydropteroate + diphosphate. It participates in cofactor biosynthesis; tetrahydrofolate biosynthesis; 2-amino-4-hydroxy-6-hydroxymethyl-7,8-dihydropteridine diphosphate from 7,8-dihydroneopterin triphosphate: step 3/4. It functions in the pathway cofactor biosynthesis; tetrahydrofolate biosynthesis; 2-amino-4-hydroxy-6-hydroxymethyl-7,8-dihydropteridine diphosphate from 7,8-dihydroneopterin triphosphate: step 4/4. Its pathway is cofactor biosynthesis; tetrahydrofolate biosynthesis; 7,8-dihydrofolate from 2-amino-4-hydroxy-6-hydroxymethyl-7,8-dihydropteridine diphosphate and 4-aminobenzoate: step 1/2. Functionally, catalyzes three sequential steps of tetrahydrofolate biosynthesis. The polypeptide is Folic acid synthesis protein FOL1 (fol1) (Dictyostelium discoideum (Social amoeba)).